Reading from the N-terminus, the 211-residue chain is Stromal cell-derived factor 2 (211 aa).

The N-terminal stretch at 1-18 (MAVLSLLLLGGLWSAVGA) is a signal peptide. 3 consecutive MIR domains span residues 21–75 (MAVV…IRGK), 83–138 (GTPI…VLCN), and 139–193 (GPYW…AMEG).

As to expression, ubiquitously expressed with highest expression in liver and kidney.

Its subcellular location is the secreted. This is Stromal cell-derived factor 2 (Sdf2) from Mus musculus (Mouse).